A 188-amino-acid chain; its full sequence is UPF0301 protein MCA2336 2 (188 aa).

The protein belongs to the UPF0301 (AlgH) family.

The chain is UPF0301 protein MCA2336 2 from Methylococcus capsulatus (strain ATCC 33009 / NCIMB 11132 / Bath).